The following is a 113-amino-acid chain: Hydrogenase maturation factor HypA (113 aa).

A Ni(2+)-binding site is contributed by His2. Residues Cys73, Cys76, Cys89, and Cys92 each coordinate Zn(2+).

The protein belongs to the HypA/HybF family.

In terms of biological role, involved in the maturation of [NiFe] hydrogenases. Required for nickel insertion into the metal center of the hydrogenase. This chain is Hydrogenase maturation factor HypA, found in Alkalilimnicola ehrlichii (strain ATCC BAA-1101 / DSM 17681 / MLHE-1).